We begin with the raw amino-acid sequence, 269 residues long: MNRISALILDWAGTTVDFGSFAPTQIFVEAFRQAFDIEITLEEARVPMGLGKWQHIEALGKLPAVDSRWQAKFGRAMTAADIDAIYAAFMPLQIAKVVDFSAPIAGVVDTIAALRAKGLKIGSCSGYPRPVMEKLVPAAAAQGYAPDHWVATDDLAAGGRPGPWMALQNVITLGIDDVAHCVKVDDAAPGISEGLHAGMWSVGLAVSGNEFGATWEEYQAMSKAEIATRRERAAGKLYAAGAHYVVDTLADLPEVIADINARLAKGERP.

Catalysis depends on aspartate 10, which acts as the Nucleophile. Mg(2+) is bound by residues aspartate 10 and alanine 12. The active-site Schiff-base intermediate with substrate is the lysine 52. Aspartate 186 is a Mg(2+) binding site.

This sequence belongs to the HAD-like hydrolase superfamily. PhnX family. Homodimer. It depends on Mg(2+) as a cofactor.

The catalysed reaction is phosphonoacetaldehyde + H2O = acetaldehyde + phosphate + H(+). In terms of biological role, involved in phosphonate degradation. The polypeptide is Phosphonoacetaldehyde hydrolase (Klebsiella pneumoniae subsp. pneumoniae (strain ATCC 700721 / MGH 78578)).